Consider the following 422-residue polypeptide: Gamma-glutamyl phosphate reductase (422 aa).

This sequence belongs to the gamma-glutamyl phosphate reductase family.

The protein localises to the cytoplasm. The catalysed reaction is L-glutamate 5-semialdehyde + phosphate + NADP(+) = L-glutamyl 5-phosphate + NADPH + H(+). It participates in amino-acid biosynthesis; L-proline biosynthesis; L-glutamate 5-semialdehyde from L-glutamate: step 2/2. In terms of biological role, catalyzes the NADPH-dependent reduction of L-glutamate 5-phosphate into L-glutamate 5-semialdehyde and phosphate. The product spontaneously undergoes cyclization to form 1-pyrroline-5-carboxylate. This Saccharophagus degradans (strain 2-40 / ATCC 43961 / DSM 17024) protein is Gamma-glutamyl phosphate reductase.